The primary structure comprises 91 residues: Na(+)/H(+) antiporter subunit F (91 aa).

Helical transmembrane passes span 5-27 (ILMI…TLIG), 34-53 (IVAL…VIMM), and 63-82 (VVLV…SKFI).

Belongs to the CPA3 antiporters (TC 2.A.63) subunit F family. In terms of assembly, forms a heterooligomeric complex that consists of seven subunits: MrpA, MrpB, MrpC, MrpD, MrpE, MrpF and MrpG.

Its subcellular location is the cell membrane. Mnh complex is a Na(+)Li(+)/H(+) antiporter involved in Na(+) and/or Li(+) excretion and Na(+) resistance. Na(+)/H(+) antiport consumes a transmembrane electrical potential, and is thus inferred to be electrogenic. Does not transport K(+), Ca(2+) or Mg(2+). This chain is Na(+)/H(+) antiporter subunit F (mrpF), found in Alkalihalophilus pseudofirmus (strain ATCC BAA-2126 / JCM 17055 / OF4) (Bacillus pseudofirmus).